The following is a 274-amino-acid chain: MAKRPAATSSNDELPFATEEPVADERSFFGGRPQNPTAPNARAALPASLSGPEHYHGHRERLRDRFREQGDTALADYEILELLLFRLIPRRDTKPIAKALIDRFGSLSGVFGAPAGLLTEVKGVGENVALDLKLISTVAHRTLKSEIRSKQVLSSWSSVIQYCHAAMAHETREQFRILFLDKRNVLIADEVQGRGTVDHTPVYPREVVKRALELSATAIILVHNHPSGDPTPSRADIDMTKVIIEAAKALDITVHDHIIIGKDGHVSLKGLKLI.

Positions 1–57 are disordered; sequence MAKRPAATSSNDELPFATEEPVADERSFFGGRPQNPTAPNARAALPASLSGPEHYHG. Residues 152 to 274 enclose the MPN domain; it reads VLSSWSSVIQ…HVSLKGLKLI (123 aa). 3 residues coordinate Zn(2+): histidine 223, histidine 225, and aspartate 236. The JAMM motif motif lies at 223 to 236; it reads HNHPSGDPTPSRAD.

The protein belongs to the UPF0758 family.

The chain is UPF0758 protein RHECIAT_CH0001935 from Rhizobium etli (strain CIAT 652).